The primary structure comprises 630 residues: A-type voltage-gated potassium channel KCND2 (630 aa).

Topologically, residues 1–184 (MAAGVAAWLP…FENPHTSTMA (184 aa)) are cytoplasmic. Residues 2–20 (AAGVAAWLPFARAAAIGWM) are interaction with KCNIP1, KCNIP2, and other family members. Thr-38 bears the Phosphothreonine mark. The interaction with KCNIP1 stretch occupies residues 71-90 (ERDFFYHPETQQYFFDRDPD). The Zn(2+) site is built by His-105, Cys-111, Cys-132, and Cys-133. Residues 185–206 (LVFYYVTGFFIAVSVIANVVET) traverse the membrane as a helical segment. The Extracellular portion of the chain corresponds to 207–226 (VPCGSSPGHIKELPCGERYA). A helical transmembrane segment spans residues 227 to 249 (VAFFCLDTACVMIFTVEYLLRLA). Residues 250–256 (AAPSRYR) are Cytoplasmic-facing. Residues 257–281 (FVRSVMSIIDVVAILPYYIGLVMTD) form a helical membrane-spanning segment. The Extracellular segment spans residues 282–287 (NEDVSG). Residues 288 to 307 (AFVTLRVFRVFRIFKFSRHS) traverse the membrane as a helical; Voltage-sensor segment. The Cytoplasmic segment spans residues 308-321 (QGLRILGYTLKSCA). Residues 308-321 (QGLRILGYTLKSCA) are S4-S5 linker. The helical transmembrane segment at 322–345 (SELGFLLFSLTMAIIIFATVMFYA) threads the bilayer. Over 346–357 (EKGSSASKFTSI) the chain is Extracellular. The segment at residues 358–369 (PAAFWYTIVTMT) is an intramembrane region (helical). The K(+) site is built by Thr-370, Leu-371, Gly-372, and Tyr-373. Positions 370-375 (TLGYGD) match the Selectivity filter motif. Residues 370–377 (TLGYGDMV) lie within the membrane without spanning it. The Extracellular segment spans residues 378-380 (PKT). The chain crosses the membrane as a helical span at residues 381–403 (IAGKIFGSICSLSGVLVIALPVP). Over 404–630 (VIVSNFSRIY…GGNIVRVSAL (227 aa)) the chain is Cytoplasmic. Position 438 is a phosphoserine (Ser-438). The interval 474-489 (FETQHHHLLHCLEKTT) is required for dendritic targeting. The tract at residues 474-630 (FETQHHHLLH…GGNIVRVSAL (157 aa)) is important for normal channel activation and inactivation, for interaction with KCNIP2, and probably other family members as well. Phosphoserine is present on residues Ser-548, Ser-552, Ser-572, and Ser-575. The interval 600 to 623 (IPTPPVTTPEGDDRPESPEYSGGN) is disordered. Thr-602 and Thr-607 each carry phosphothreonine. Ser-616 carries the post-translational modification Phosphoserine. The PDZ-binding signature appears at 627–630 (VSAL).

It belongs to the potassium channel family. D (Shal) (TC 1.A.1.2) subfamily. Kv4.2/KCND2 sub-subfamily. In terms of assembly, homotetramer or heterotetramer with KCND1 or KCND3. Associates with the regulatory subunits KCNIP2, KCNIP3 and KCNIP4. Interacts with the regulatory subunit KCNIP1; this interaction mediates the capture of both the N- and C-terminus of KCND2, preventing N-type inactivation and stabilizing the S6 conformation, thereby accelerating closed state inactivation and recovery. Interacts with DPP10, DLG4 and DLG1. In vivo, probably exists as heteromeric complex containing variable proportions of KCND1, KCND2, KCND3, KCNIP1, KCNIP2, KCNIP3, KCNIP4, DPP6 and DPP10. The tetrameric channel can associate with up to four regulatory subunits, such as KCNIP2 or KCNIP4. Interaction with KCNIP3 promotes tetramerization and formation of a functional potassium channel. Interaction with four KCNIP4 chains does not reduce interaction with DPP10. Probably part of a complex consisting of KCNIP1, KCNIP2 isoform 3 and KCND2. Interacts with FLNA and FLNC. Interacts with NCS1/FREQ. Identified in a complex with cAMP-dependent protein kinase (PKA), CAV3, AKAP6 and KCND3 in cardiac myocytes. Interacts (via S1 and S2 helices) with DPP6; this interaction stabilizes the conformation of the S1-S2 helices and facilitates S4 conformational change, including S4 sliding up and down, thereby accelerating activation, inactivation, and recovery. In terms of processing, phosphorylation at Ser-438 in response to MAPK activation is increased in stimulated dendrites. Interaction with KCNIP2 and DPP6 propomtes phosphorylation by PKA at Ser-552. Phosphorylation at Ser-552 has no effect on interaction with KCNIP3, but is required for the regulation of channel activity by KCNIP3. Phosphorylation at Ser-552 leads to KCND2 internalization. Phosphorylated by MAPK in response to signaling via the metabotropic glutamate receptor GRM5. Phosphorylation at Ser-616 is required for the down-regulation of neuronal A-type currents in response to signaling via GRM5. Detected in brain cortex, hippocampus, dentate gyrus, thalamus and cerebellum. Detected in neurons from the primary visual cortex. Detected in the supraoptic nucleus in hypothalamus, in hippocampus and the habenular nucleus of the thalamus. Detected in the bed nucleus of the stria terminalis. Detected in dendritic fields in the hippocampus CA1 layer, in stratum radiatum, stratum oriens, stratum lacunosum-moleculare and stratum pyramidale. Detected in dendritic fields in the hippocampus CA3 layer and in dentate gyrus. Detected in the cerebellum granule cell layer, where it localizes at synapses. Detected in the main olfactory bulb, especially in the granule cell layer and the external plexiform layer, but also the mitral layer. Detected in heart atrium and ventricle. Detected in heart left ventricle (at protein level). Highly expressed in heart and throughout the brain, with similar levels in cortex and hypothalamus, and much higher levels in hippocampus, dentate gyrus and the habenular nucleus of the thalamus. Detected in brain, and at lower levels in heart atrium and ventricle. Detected in neurons from the bed nucleus of the stria terminalis. Detected in aorta, cardiac and smooth muscle.

Its subcellular location is the cell membrane. The protein resides in the cell projection. It localises to the dendrite. It is found in the synapse. The protein localises to the perikaryon. Its subcellular location is the postsynaptic cell membrane. The protein resides in the dendritic spine. It localises to the sarcolemma. It is found in the cell junction. The protein localises to the membrane. Its subcellular location is the caveola. The catalysed reaction is K(+)(in) = K(+)(out). Inhibited by 5 mM 4-aminopyridine (4-AP). Not inhibited by dendrotoxins and by tetraethylammonium (TEA). Inhibited by 10 mM flecainide and 20 mM quinidine. Inhibited by the heteropodatoxins HpTx(1), HpTx(2), and HpTx(3). In terms of biological role, voltage-gated potassium channel that mediates transmembrane potassium transport in excitable membranes, primarily in the brain, but also in rodent heart. Mediates the major part of the dendritic A-type current I(SA) in brain neurons. This current is activated at membrane potentials that are below the threshold for action potentials. It regulates neuronal excitability, prolongs the latency before the first spike in a series of action potentials, regulates the frequency of repetitive action potential firing, shortens the duration of action potentials and regulates the back-propagation of action potentials from the neuronal cell body to the dendrites. Contributes to the regulation of the circadian rhythm of action potential firing in suprachiasmatic nucleus neurons, which regulates the circadian rhythm of locomotor activity. Functions downstream of the metabotropic glutamate receptor GRM5 and plays a role in neuronal excitability and in nociception mediated by activation of GRM5. Mediates the transient outward current I(to) in rodent heart left ventricle apex cells, but not in human heart, where this current is mediated by another family member. Forms tetrameric potassium-selective channels through which potassium ions pass in accordance with their electrochemical gradient. The channel alternates between opened and closed conformations in response to the voltage difference across the membrane. Can form functional homotetrameric channels and heterotetrameric channels that contain variable proportions of KCND2 and KCND3; channel properties depend on the type of pore-forming alpha subunits that are part of the channel. In vivo, membranes probably contain a mixture of heteromeric potassium channel complexes. Interaction with specific isoforms of the regulatory subunits KCNIP1, KCNIP2, KCNIP3 or KCNIP4 strongly increases expression at the cell surface and thereby increases channel activity; it modulates the kinetics of channel activation and inactivation, shifts the threshold for channel activation to more negative voltage values, shifts the threshold for inactivation to less negative voltages and accelerates recovery after inactivation. Likewise, interaction with DPP6 or DPP10 promotes expression at the cell membrane and regulates both channel characteristics and activity. Upon depolarization, the channel goes from a resting closed state (C state) to an activated but non-conducting state (C* state), from there, the channel may either inactivate (I state) or open (O state). The sequence is that of A-type voltage-gated potassium channel KCND2 from Rattus norvegicus (Rat).